The primary structure comprises 60 residues: UPF0434 protein ECA2555 (60 aa).

Belongs to the UPF0434 family.

This chain is UPF0434 protein ECA2555, found in Pectobacterium atrosepticum (strain SCRI 1043 / ATCC BAA-672) (Erwinia carotovora subsp. atroseptica).